Here is a 359-residue protein sequence, read N- to C-terminus: MTLESIMACCLSEEAKEARRINDEIERQLRRDKRDARRELKLLLLGTGESGKSTFIKQMRIIHGSGYSDEDKRGFTKLVYQNIFTAMQAMVRAMDTLKIPYKYEHNKAHAQLVREVDVEKVSAFENPYVDAIKSLWNDPGIQECYDRRREYQLSDSTKYYLNDLDRVADPSYLPTQQDVLRVRVPTTGIIEYPFDLQSVIFRMVDVGGQRSERRKWIHCFENVTSIMFLVALSEYDQVLVESDNENRMEESKALFRTIITYPWFQNSSVILFLNKKDLLEEKIMYSHLVDYFPEYDGPQRDAQAAREFILKMFVDLNPDSDKIIYSHFTCATDTENIRFVFAAVKDTILQLNLKEYNLV.

S-palmitoyl cysteine attachment occurs at residues cysteine 9 and cysteine 10. The G-alpha domain occupies 38–359; that stretch reads RELKLLLLGT…QLNLKEYNLV (322 aa). Positions 41–54 are G1 motif; that stretch reads KLLLLGTGESGKST. GTP is bound by residues serine 50, glycine 51, lysine 52, serine 53, threonine 54, serine 156, leucine 180, arginine 181, and arginine 183. Serine 53 contacts Mg(2+). The tract at residues 178–186 is G2 motif; sequence DVLRVRVPT. Threonine 186 contacts Mg(2+). The segment at 201 to 210 is G3 motif; sequence FRMVDVGGQR. A 5-glutamyl histamine modification is found at glutamine 209. Positions 270 to 277 are G4 motif; it reads ILFLNKKD. Asparagine 274, lysine 275, aspartate 277, and alanine 331 together coordinate GTP. Positions 329–334 are G5 motif; sequence TCATDT.

Belongs to the G-alpha family. G(q) subfamily. In terms of assembly, g proteins are composed of 3 units; alpha, beta and gamma. The alpha chain contains the guanine nucleotide binding site. Interacts (GDP-bound form) with RIC8A (via C-terminus); promoting GNAQ folding and association with the plasma membrane. Binds NHERF1. Forms a complex with PECAM1 and BDKRB2. Interacts with GAS2L2. Post-translationally, palmitoylated by ZDHHC3 and ZDHHC7. Palmitoylation occurs in the Golgi and participates in the localization of GNAQ to the plasma membrane. Histaminylated at Gln-209 residues by TGM2.

Its subcellular location is the cell membrane. The protein resides in the golgi apparatus. It localises to the nucleus. It is found in the nucleus membrane. The catalysed reaction is GTP + H2O = GDP + phosphate + H(+). In terms of biological role, guanine nucleotide-binding proteins (G proteins) function as transducers downstream of G protein-coupled receptors (GPCRs) in numerous signaling cascades. The alpha chain contains the guanine nucleotide binding site and alternates between an active, GTP-bound state and an inactive, GDP-bound state. Signaling by an activated GPCR promotes GDP release and GTP binding. The alpha subunit has a low GTPase activity that converts bound GTP to GDP, thereby terminating the signal. Both GDP release and GTP hydrolysis are modulated by numerous regulatory proteins. Signaling is mediated via phospholipase C-beta-dependent inositol lipid hydrolysis for signal propagation: activates phospholipase C-beta: following GPCR activation, GNAQ activates PLC-beta (PLCB1, PLCB2, PLCB3 or PLCB4), leading to production of diacylglycerol (DAG) and inositol 1,4,5-trisphosphate (IP3). Required for platelet activation. Regulates B-cell selection and survival and is required to prevent B-cell-dependent autoimmunity. Regulates chemotaxis of BM-derived neutrophils and dendritic cells (in vitro). Transduces FFAR4 signaling in response to long-chain fatty acids (LCFAs). Together with GNA11, required for heart development. In Rattus norvegicus (Rat), this protein is Guanine nucleotide-binding protein G(q) subunit alpha (Gnaq).